A 59-amino-acid polypeptide reads, in one-letter code: Large ribosomal subunit protein bL32 (59 aa).

This sequence belongs to the bacterial ribosomal protein bL32 family. In terms of assembly, part of the 50S ribosomal subunit.

In Bacillus subtilis (strain 168), this protein is Large ribosomal subunit protein bL32 (rpmF).